The following is an 808-amino-acid chain: MLRFPTCFPSFRVVGEKQLPQEIIFLVWSPKRDLIALANTAGEVLLHRLASFHRVWSFPPNENTGKEVTCLAWRPDGKLLAFALADTKKIVLCDVEKPESLHSFSVEAPVSCMHWMEVTVESSVLTSFYNAEDESNLLLPKLPTLPKNYSNTSKIFSEENSDEIIKLLGDVRLNILVLGGSSGFIELYAYGMFKIARVTGIAGTCLALCLSSDLKSLSVVTEVSTNGASEVSYFQLETNLLYSFLPEVTRMARKFTHISALLQYINLSLTCMCEAWEEILMQMDSRLTKFVQEKNTTTSVQDEFMHLLLWGKASAELQTLLMNQLTVKGLKKLGQSIESSYSSIQKLVISHLQSGSESLLYHLSELKGMASWKQKYEPLGLDAAGIEEAITAVGSFILKANELLQVIDSSMKNFKAFFRWLYVAMLRMTEDHVLPELNKMTQKDITFVAEFLTEHFNEAPDLYNRKGKYFNVERVGQYLKDEDDDLVSPPNTEGNQWYDFLQNSSHLKESPLLFPYYPRKSLHFVKRRMENIIDQCLQKPADVIGKSMNQAICIPLYRDTRSEDSTRRLFKFPFLWNNKTSNLHYLLFTILEDSLYKMCILRRHTDISQSVSNGLIAIKFGSFTYATTEKVRRSIYSCLDAQFYDDETVTVVLKDTVGREGRDRLLVQLPLSLVYNSEDSAEYQFTGTYSTRLDEQCSAIPTRTMHFEKHWRLLESMKAQYVAGNGFRKVSCVLSSNLRHVRVFEMDIDDEWELDESSDEEEEASNKPVKIKEEVLSESEAENQQAGAAALAPEIVIKVEKLDPELDS.

A Phosphotyrosine modification is found at Tyr-469. Phosphoserine is present on residues Ser-757 and Ser-758. A Glycyl lysine isopeptide (Lys-Gly) (interchain with G-Cter in SUMO2) cross-link involves residue Lys-772. Ser-777 and Ser-779 each carry phosphoserine. A Glycyl lysine isopeptide (Lys-Gly) (interchain with G-Cter in SUMO2) cross-link involves residue Lys-798.

This sequence belongs to the APC4 family. As to quaternary structure, the mammalian APC/C is composed at least of 14 distinct subunits ANAPC1, ANAPC2, CDC27/APC3, ANAPC4, ANAPC5, CDC16/APC6, ANAPC7, CDC23/APC8, ANAPC10, ANAPC11, CDC26/APC12, ANAPC13, ANAPC15 and ANAPC16 that assemble into a complex of at least 19 chains with a combined molecular mass of around 1.2 MDa; APC/C interacts with FZR1 and FBXO5. In the context of the APC/C complex, directly interacts with UBE2S. Interacts with FBXO43.

Its subcellular location is the nucleus. Its pathway is protein modification; protein ubiquitination. In terms of biological role, component of the anaphase promoting complex/cyclosome (APC/C), a cell cycle-regulated E3 ubiquitin ligase that controls progression through mitosis and the G1 phase of the cell cycle. The APC/C complex acts by mediating ubiquitination and subsequent degradation of target proteins: it mainly mediates the formation of 'Lys-11'-linked polyubiquitin chains and, to a lower extent, the formation of 'Lys-48'- and 'Lys-63'-linked polyubiquitin chains. The APC/C complex catalyzes assembly of branched 'Lys-11'-/'Lys-48'-linked branched ubiquitin chains on target proteins. This chain is Anaphase-promoting complex subunit 4 (ANAPC4), found in Homo sapiens (Human).